The sequence spans 427 residues: MLDPKLLRNALADTTRQLARRGFEWDAAAFATLEAERKEMQVCTQELQAKRNARSKIIGKAKAQGEDIAPLLAEMTELGDHLKTVEARLEVVQAQIEEILLGIPNLPDASTPPGKDEQDNVEVRRWGTPPALEFVPKDHVDLGASLGMDFETAVKLSGTRFVTLIGPLAQLHRALIQFMLDVHTREHGYTEVYVPYLANRESLVGTGQLPKFEEGLFAIRDTGYYLIPTAEVPVTNLVRGEILLAERLPLKYVAHTPCFRSEAGSYGKDTRGMIRQHQFEKVELVQIVPPEVSQQAHEDLTGHAEAILQRLGLPYRVMNLCAGDLGFASSKTYDLEVWLPGQQTYREISSCSNFLDFQARRIQARWRDPKTQKPAWVHTLNGSGLAVGRTLLALMENYQQADGSIRIPETLQPYMGGVSVLQPSIRG.

Residue 229–231 (TAE) participates in L-serine binding. 260-262 (RSE) contributes to the ATP binding site. An L-serine-binding site is contributed by glutamate 283. Position 347-350 (347-350 (EISS)) interacts with ATP. Residue serine 383 participates in L-serine binding.

The protein belongs to the class-II aminoacyl-tRNA synthetase family. Type-1 seryl-tRNA synthetase subfamily. In terms of assembly, homodimer. The tRNA molecule binds across the dimer.

The protein localises to the cytoplasm. It catalyses the reaction tRNA(Ser) + L-serine + ATP = L-seryl-tRNA(Ser) + AMP + diphosphate + H(+). It carries out the reaction tRNA(Sec) + L-serine + ATP = L-seryl-tRNA(Sec) + AMP + diphosphate + H(+). Its pathway is aminoacyl-tRNA biosynthesis; selenocysteinyl-tRNA(Sec) biosynthesis; L-seryl-tRNA(Sec) from L-serine and tRNA(Sec): step 1/1. Catalyzes the attachment of serine to tRNA(Ser). Is also able to aminoacylate tRNA(Sec) with serine, to form the misacylated tRNA L-seryl-tRNA(Sec), which will be further converted into selenocysteinyl-tRNA(Sec). This is Serine--tRNA ligase from Nitrosococcus oceani (strain ATCC 19707 / BCRC 17464 / JCM 30415 / NCIMB 11848 / C-107).